The sequence spans 374 residues: Ribosomal RNA large subunit methyltransferase G (374 aa).

This sequence belongs to the methyltransferase superfamily. RlmG family.

It localises to the cytoplasm. The enzyme catalyses guanosine(1835) in 23S rRNA + S-adenosyl-L-methionine = N(2)-methylguanosine(1835) in 23S rRNA + S-adenosyl-L-homocysteine + H(+). In terms of biological role, specifically methylates the guanine in position 1835 (m2G1835) of 23S rRNA. The sequence is that of Ribosomal RNA large subunit methyltransferase G from Pseudomonas fluorescens (strain Pf0-1).